A 295-amino-acid chain; its full sequence is Geranylfarnesyl diphosphate synthase (295 aa).

Lysine 51, arginine 54, and histidine 83 together coordinate isopentenyl diphosphate. The Mg(2+) site is built by aspartate 90 and aspartate 94. Arginine 99 provides a ligand contact to an all-trans-polyprenyl diphosphate. Position 100 (arginine 100) interacts with isopentenyl diphosphate. Residues lysine 174, threonine 175, and glutamine 212 each coordinate an all-trans-polyprenyl diphosphate.

The protein belongs to the FPP/GGPP synthase family. In terms of assembly, homodimer. Mg(2+) serves as cofactor.

The enzyme catalyses isopentenyl diphosphate + (2E,6E,10E)-geranylgeranyl diphosphate = (2E,6E,10E,14E)-geranylfarnesyl diphosphate + diphosphate. Involved in biosynthesis of the polyprenyl side-chain of methanophenazine, an electron carrier utilized for methanogenesis. Catalyzes the condensation of isopentenyl pyrophosphate with the allylic pyrophosphates to yield geranylfarnesyl diphosphate (GFPP). It prefers geranylgeranyl diphosphate (GGPP) and farnesyl diphosphate (FPP) as allylic substrate. The protein is Geranylfarnesyl diphosphate synthase of Methanosarcina mazei (strain ATCC BAA-159 / DSM 3647 / Goe1 / Go1 / JCM 11833 / OCM 88) (Methanosarcina frisia).